Reading from the N-terminus, the 200-residue chain is Glycerol-3-phosphate acyltransferase (200 aa).

Transmembrane regions (helical) follow at residues 4-24, 70-90, 110-130, and 158-178; these read ALLA…YWVG, ALGS…FAVI, LGIL…VWLL, and QPLP…GAHR.

The protein belongs to the PlsY family. In terms of assembly, probably interacts with PlsX.

Its subcellular location is the cell inner membrane. The catalysed reaction is an acyl phosphate + sn-glycerol 3-phosphate = a 1-acyl-sn-glycero-3-phosphate + phosphate. Its pathway is lipid metabolism; phospholipid metabolism. Its function is as follows. Catalyzes the transfer of an acyl group from acyl-phosphate (acyl-PO(4)) to glycerol-3-phosphate (G3P) to form lysophosphatidic acid (LPA). This enzyme utilizes acyl-phosphate as fatty acyl donor, but not acyl-CoA or acyl-ACP. This chain is Glycerol-3-phosphate acyltransferase, found in Synechococcus sp. (strain JA-2-3B'a(2-13)) (Cyanobacteria bacterium Yellowstone B-Prime).